Consider the following 207-residue polypeptide: MTSRKKVLLKVIILGDSGVGKTSLMNQYVNKKFSNQYKATIGADFLTKEVMVDDRLVTMQIWDTAGQERFQSLGVAFYRGADCCVLVFDVTAPNTFKTLDSWRDEFLIQASPRDPENFPFVVLGNKIDLENRQVATKRAQAWCYSKNNIPYFETSAKEAINVEQAFQTIARNALKQETEVELYNEFPKPIKLDKNDRAKASAESCSC.

Threonine 2 carries the post-translational modification N-acetylthreonine. 11 residues coordinate GTP: serine 17, glycine 18, valine 19, glycine 20, lysine 21, threonine 22, serine 23, serine 34, asparagine 35, tyrosine 37, and threonine 40. A Mg(2+)-binding site is contributed by threonine 22. Positions 28 to 41 (YVNKKFSNQYKATI) match the Switch 1 motif. 2 residues coordinate Mg(2+): threonine 40 and aspartate 63. Glycine 66 contacts GTP. The Switch 2 motif lies at 67–82 (QERFQSLGVAFYRGAD). Position 72 is a phosphoserine (serine 72). Asparagine 125, lysine 126, aspartate 128, alanine 156, and lysine 157 together coordinate GTP. Glycyl lysine isopeptide (Lys-Gly) (interchain with G-Cter in ubiquitin) cross-links involve residues lysine 191 and lysine 194. Residues cysteine 205 and cysteine 207 are each lipidated (S-geranylgeranyl cysteine). Cysteine methyl ester is present on cysteine 207.

Belongs to the small GTPase superfamily. Rab family. As to quaternary structure, interacts with NTRK1/TRKA. Interacts with RILP. Interacts with PSMA7. Interacts with RNF115. Interacts with FYCO1. Interacts with the PIK3C3/VPS34-PIK3R4 complex. The GTP-bound form interacts with OSBPL1A. The GTP-bound form interacts with RAC1. Interacts with CLN3. Interacts with CHM, the substrate-binding subunit of the Rab geranylgeranyltransferase complex. Interacts with C9orf72. Does not interact with HPS4 and the BLOC-3 complex (heterodimer of HPS1 and HPS4). Interacts with CLN5. Interacts with PLEKHM1 (via N- and C-terminus). Interacts with PRPH; the interaction is direct. Interacts with VPS13A. The GDP-bound form interacts with RIMOC1. Interacts with the MON1A-CCZ1B complex and this interaction is enhanced in the presence of RIMOC1. Interacts with VPS39 and VPS41. Forms a ternary complex with LAMP2 and RUFY4; the interaction with LAMP2 is mediated by RUFY4 (via RUN and coiled coil domains). It depends on Mg(2+) as a cofactor. Deubiquitination at Lys-191 and Lys-194 by USP32. Post-translationally, phosphorylated at Ser-72 by LRRK1; phosphorylation is dependent on protein kinase C (PKC) activation of LRRK1. In terms of processing, prenylated. Prenylation is required for association with cellular membranes.

Its subcellular location is the cytoplasmic vesicle. The protein localises to the phagosome membrane. It localises to the late endosome membrane. It is found in the lysosome membrane. The protein resides in the melanosome membrane. Its subcellular location is the autophagosome membrane. The protein localises to the lipid droplet. It localises to the endosome membrane. It is found in the mitochondrion membrane. It carries out the reaction GTP + H2O = GDP + phosphate + H(+). With respect to regulation, regulated by guanine nucleotide exchange factors (GEFs) which promote the exchange of bound GDP for free GTP. Regulated by GTPase activating proteins (GAPs) which increase the GTP hydrolysis activity. Inhibited by GDP dissociation inhibitors (GDIs). In terms of biological role, the small GTPases Rab are key regulators of intracellular membrane trafficking, from the formation of transport vesicles to their fusion with membranes. Rabs cycle between an inactive GDP-bound form and an active GTP-bound form that is able to recruit to membranes different sets of downstream effectors directly responsible for vesicle formation, movement, tethering and fusion. In its active state, RAB7A binds to a variety of effector proteins playing a key role in the regulation of endo-lysosomal trafficking. Governs early-to-late endosomal maturation, microtubule minus-end as well as plus-end directed endosomal migration and positioning, and endosome-lysosome transport through different protein-protein interaction cascades. Also plays a central role in growth-factor-mediated cell signaling, nutrient-transporter-mediated nutrient uptake, neurotrophin transport in the axons of neurons and lipid metabolism. Also involved in regulation of some specialized endosomal membrane trafficking, such as maturation of melanosomes, pathogen-induced phagosomes (or vacuoles) and autophagosomes. Plays a role in the maturation and acidification of phagosomes that engulf pathogens, such as S.aureus and Mycobacteria. Plays a role in the fusion of phagosomes with lysosomes. In concert with RAC1, plays a role in regulating the formation of RBs (ruffled borders) in osteoclasts. Controls the endosomal trafficking and neurite outgrowth signaling of NTRK1/TRKA. Regulates the endocytic trafficking of the EGF-EGFR complex by regulating its lysosomal degradation. Involved in the ADRB2-stimulated lipolysis through lipophagy, a cytosolic lipase-independent autophagic pathway. Required for the exosomal release of SDCBP, CD63 and syndecan. Required for vesicular trafficking and cell surface expression of ACE2. May play a role in PRPH neuronal intermediate filament assembly. The polypeptide is Ras-related protein Rab-7a (RAB7A) (Pongo abelii (Sumatran orangutan)).